The chain runs to 490 residues: Betaine aldehyde dehydrogenase (490 aa).

K(+) contacts are provided by threonine 26, isoleucine 27, and aspartate 93. 150–152 contributes to the NAD(+) binding site; sequence GAW. Lysine 162 acts as the Charge relay system in catalysis. 176 to 179 contacts NAD(+); the sequence is KPSE. Valine 180 provides a ligand contact to K(+). Residue 230-233 coordinates NAD(+); the sequence is GTST. Leucine 246 contacts K(+). Catalysis depends on glutamate 252, which acts as the Proton acceptor. The NAD(+) site is built by glycine 254, cysteine 286, and glutamate 387. Cysteine 286 serves as the catalytic Nucleophile. The residue at position 286 (cysteine 286) is a Cysteine sulfenic acid (-SOH). Positions 457 and 460 each coordinate K(+). The Charge relay system role is filled by glutamate 464.

The protein belongs to the aldehyde dehydrogenase family. As to quaternary structure, dimer of dimers. It depends on K(+) as a cofactor.

It carries out the reaction betaine aldehyde + NAD(+) + H2O = glycine betaine + NADH + 2 H(+). Its pathway is amine and polyamine biosynthesis; betaine biosynthesis via choline pathway; betaine from betaine aldehyde: step 1/1. Involved in the biosynthesis of the osmoprotectant glycine betaine. Catalyzes the irreversible oxidation of betaine aldehyde to the corresponding acid. This is Betaine aldehyde dehydrogenase from Pseudomonas aeruginosa (strain UCBPP-PA14).